Reading from the N-terminus, the 146-residue chain is Hemoglobin subunit beta (146 aa).

Residue V1 is modified to N-acetylvaline. One can recognise a Globin domain in the interval 2 to 146 (HLTGEEKSTV…VATALAHKYH (145 aa)). At S44 the chain carries Phosphoserine. K59 carries the post-translational modification N6-acetyllysine. H63 is a binding site for heme b. Residue K82 is modified to N6-acetyllysine. H92 contributes to the heme b binding site. C93 carries the S-nitrosocysteine modification. An N6-acetyllysine modification is found at K144.

This sequence belongs to the globin family. In terms of assembly, heterotetramer of two alpha chains and two beta chains. In terms of tissue distribution, red blood cells.

Its function is as follows. Involved in oxygen transport from the lung to the various peripheral tissues. This is Hemoglobin subunit beta (HBB) from Macrotus californicus (Californian leaf-nosed bat).